Reading from the N-terminus, the 280-residue chain is uncharacterized protein (280 aa).

Positions 1–21 (MRPVIKVGLSTASVYPLRAEA) are cleaved as a signal peptide.

It to M.tuberculosis Rv0498 and S.coelicolor SCO3347.

This is an uncharacterized protein from Mycobacterium leprae (strain TN).